Reading from the N-terminus, the 405-residue chain is L-cysteine:1D-myo-inositol 2-amino-2-deoxy-alpha-D-glucopyranoside ligase (405 aa).

C43 lines the Zn(2+) pocket. Residues C43–T46, T58, and N81–T83 each bind L-cysteinyl-5'-AMP. The 'HIGH' region motif lies at I45–H55. The 'ERGGDP' region signature appears at E187 to P192. L-cysteinyl-5'-AMP is bound at residue W227. C231 contributes to the Zn(2+) binding site. Residue G249 to D251 coordinates L-cysteinyl-5'-AMP. H256 contributes to the Zn(2+) binding site. I283 serves as a coordination point for L-cysteinyl-5'-AMP. The short motif at K289 to S293 is the 'KMSKS' region element.

Belongs to the class-I aminoacyl-tRNA synthetase family. MshC subfamily. As to quaternary structure, monomer. The cofactor is Zn(2+).

It carries out the reaction 1D-myo-inositol 2-amino-2-deoxy-alpha-D-glucopyranoside + L-cysteine + ATP = 1D-myo-inositol 2-(L-cysteinylamino)-2-deoxy-alpha-D-glucopyranoside + AMP + diphosphate + H(+). Catalyzes the ATP-dependent condensation of GlcN-Ins and L-cysteine to form L-Cys-GlcN-Ins. This Nakamurella multipartita (strain ATCC 700099 / DSM 44233 / CIP 104796 / JCM 9543 / NBRC 105858 / Y-104) (Microsphaera multipartita) protein is L-cysteine:1D-myo-inositol 2-amino-2-deoxy-alpha-D-glucopyranoside ligase.